A 171-amino-acid chain; its full sequence is 2-C-methyl-D-erythritol 2,4-cyclodiphosphate synthase (171 aa).

The a divalent metal cation site is built by Asp8 and His10. Residues 8 to 10 (DVH) and 34 to 35 (HS) each bind 4-CDP-2-C-methyl-D-erythritol 2-phosphate. His42 contributes to the a divalent metal cation binding site. 4-CDP-2-C-methyl-D-erythritol 2-phosphate contacts are provided by residues 56–58 (DIG), 61–65 (FPDTD), 132–135 (TTTE), Phe139, and Arg142.

Belongs to the IspF family. Homotrimer. A divalent metal cation is required as a cofactor.

The catalysed reaction is 4-CDP-2-C-methyl-D-erythritol 2-phosphate = 2-C-methyl-D-erythritol 2,4-cyclic diphosphate + CMP. It participates in isoprenoid biosynthesis; isopentenyl diphosphate biosynthesis via DXP pathway; isopentenyl diphosphate from 1-deoxy-D-xylulose 5-phosphate: step 4/6. In terms of biological role, involved in the biosynthesis of isopentenyl diphosphate (IPP) and dimethylallyl diphosphate (DMAPP), two major building blocks of isoprenoid compounds. Catalyzes the conversion of 4-diphosphocytidyl-2-C-methyl-D-erythritol 2-phosphate (CDP-ME2P) to 2-C-methyl-D-erythritol 2,4-cyclodiphosphate (ME-CPP) with a corresponding release of cytidine 5-monophosphate (CMP). The protein is 2-C-methyl-D-erythritol 2,4-cyclodiphosphate synthase of Geotalea daltonii (strain DSM 22248 / JCM 15807 / FRC-32) (Geobacter daltonii).